The chain runs to 929 residues: SED5-binding protein 3 (929 aa).

A Phosphoserine modification is found at Ser-15. The segment covering 18–28 (ESTVHTGGASS) has biased composition (polar residues). The disordered stretch occupies residues 18 to 52 (ESTVHTGGASSKKSRRPHRAYHNFSSGTVPTLGNS). The segment covering 29–38 (KKSRRPHRAY) has biased composition (basic residues). Over residues 40–52 (NFSSGTVPTLGNS) the composition is skewed to polar residues. Phosphothreonine is present on Thr-72. Ser-83, Ser-85, Ser-94, Ser-101, and Ser-110 each carry phosphoserine. Residue Thr-216 is modified to Phosphothreonine. Positions 220–244 (CRRCRAYANPKFQFTYDSSVICNIC) are zinc finger-like.

Belongs to the SEC23/SEC24 family. SEC24 subfamily. COPII is composed of at least five proteins: the SEC23/24 complex, the SEC13/31 complex and SAR1. Binds to SED5. Interacts with GHR1.

It localises to the cytoplasm. The protein resides in the golgi apparatus membrane. It is found in the endoplasmic reticulum membrane. Functionally, component of the COPII coat, that covers ER-derived vesicles involved in transport from the endoplasmic reticulum to the Golgi apparatus. COPII acts in the cytoplasm to promote the transport of secretory, plasma membrane, and vacuolar proteins from the endoplasmic reticulum to the Golgi complex. The protein is SED5-binding protein 3 (SFB3) of Saccharomyces cerevisiae (strain ATCC 204508 / S288c) (Baker's yeast).